Here is a 70-residue protein sequence, read N- to C-terminus: Small ribosomal subunit protein bS21 (70 aa).

The protein belongs to the bacterial ribosomal protein bS21 family.

The polypeptide is Small ribosomal subunit protein bS21 (Delftia acidovorans (strain DSM 14801 / SPH-1)).